The sequence spans 412 residues: Peptidase T (412 aa).

H84 provides a ligand contact to Zn(2+). D86 is a catalytic residue. D146 provides a ligand contact to Zn(2+). E179 functions as the Proton acceptor in the catalytic mechanism. The Zn(2+) site is built by E180, D202, and H385.

Belongs to the peptidase M20B family. The cofactor is Zn(2+).

It is found in the cytoplasm. The enzyme catalyses Release of the N-terminal residue from a tripeptide.. Its function is as follows. Cleaves the N-terminal amino acid of tripeptides. This is Peptidase T from Haemophilus influenzae (strain PittEE).